Here is a 174-residue protein sequence, read N- to C-terminus: Large ribosomal subunit protein uL18 (174 aa).

Belongs to the universal ribosomal protein uL18 family. As to quaternary structure, part of the 50S ribosomal subunit. Contacts the 5S and 23S rRNAs.

Its function is as follows. This is one of the proteins that bind and probably mediate the attachment of the 5S RNA into the large ribosomal subunit, where it forms part of the central protuberance. In Methanoregula boonei (strain DSM 21154 / JCM 14090 / 6A8), this protein is Large ribosomal subunit protein uL18.